A 98-amino-acid chain; its full sequence is Endoribonuclease antitoxin GhoS (98 aa).

As to quaternary structure, monomer. Unlike other TA antitoxins, this protein is stable.

Antitoxin component of a type V toxin-antitoxin (TA) system. Neutralizes the toxic effects of toxin GhoT by digesting ghoT transcripts in a sequence-specific manner. In concert with GhoT is involved in reducing cell growth during antibacterial stress. The sequence is that of Endoribonuclease antitoxin GhoS from Escherichia coli O157:H7.